Here is a 367-residue protein sequence, read N- to C-terminus: NAD(P)H-quinone oxidoreductase subunit 1, chloroplastic (367 aa).

A run of 8 helical transmembrane segments spans residues 29 to 49 (WIPLPILLLIILAVVGVLVVV), 96 to 116 (VLLFTLGPAIVVIPIFLSYLI), 128 to 148 (INLGIFFWITVSSVAPLGLLM), 176 to 196 (LALCVLSICLLSDSLSTIDIV), 204 to 224 (ILGWNIWRQPIGFIAFIIAAL), 266 to 286 (LVSALFASVLYLGGWSLPIPI), 304 to 324 (VISAFLGIGMTLLKTYLFLFL), and 347 to 367 (FLLPISLGNLLLTASLKIALL).

It belongs to the complex I subunit 1 family. In terms of assembly, NDH is composed of at least 16 different subunits, 5 of which are encoded in the nucleus.

Its subcellular location is the plastid. It is found in the chloroplast thylakoid membrane. The catalysed reaction is a plastoquinone + NADH + (n+1) H(+)(in) = a plastoquinol + NAD(+) + n H(+)(out). The enzyme catalyses a plastoquinone + NADPH + (n+1) H(+)(in) = a plastoquinol + NADP(+) + n H(+)(out). Functionally, NDH shuttles electrons from NAD(P)H:plastoquinone, via FMN and iron-sulfur (Fe-S) centers, to quinones in the photosynthetic chain and possibly in a chloroplast respiratory chain. The immediate electron acceptor for the enzyme in this species is believed to be plastoquinone. Couples the redox reaction to proton translocation, and thus conserves the redox energy in a proton gradient. The polypeptide is NAD(P)H-quinone oxidoreductase subunit 1, chloroplastic (Mesostigma viride (Green alga)).